The sequence spans 117 residues: Large ribosomal subunit protein bL19 (117 aa).

It belongs to the bacterial ribosomal protein bL19 family.

Its function is as follows. This protein is located at the 30S-50S ribosomal subunit interface and may play a role in the structure and function of the aminoacyl-tRNA binding site. The protein is Large ribosomal subunit protein bL19 of Thermotoga neapolitana (strain ATCC 49049 / DSM 4359 / NBRC 107923 / NS-E).